Reading from the N-terminus, the 1533-residue chain is Glycogen debranching enzyme (1533 aa).

The residue at position 64 (serine 64) is a Phosphoserine. Active-site residues include aspartate 527, histidine 530, and aspartate 628.

Belongs to the glycogen debranching enzyme family. Monomer. Interacts with NHLRC1/malin. In terms of processing, ubiquitinated. Ubiquitous. Expressed in striated skeletal muscle, heart, liver, spleen, skin, spinal cord, lung, kidney and testicle.

The protein resides in the cytoplasm. The enzyme catalyses Transfers a segment of a (1-&gt;4)-alpha-D-glucan to a new position in an acceptor, which may be glucose or a (1-&gt;4)-alpha-D-glucan.. It catalyses the reaction Hydrolysis of (1-&gt;6)-alpha-D-glucosidic branch linkages in glycogen phosphorylase limit dextrin.. Functionally, multifunctional enzyme acting as 1,4-alpha-D-glucan:1,4-alpha-D-glucan 4-alpha-D-glycosyltransferase and amylo-1,6-glucosidase in glycogen degradation. The polypeptide is Glycogen debranching enzyme (Equus caballus (Horse)).